A 156-amino-acid polypeptide reads, in one-letter code: PopC secretion inhibitor (156 aa).

The disordered stretch occupies residues Met-1–Gln-89. Basic and acidic residues predominate over residues Trp-8–Asp-28.

Interacts with PopC in non-starving cells.

It is found in the cytoplasm. Its activity is regulated as follows. In response to starvation, RelA is activated resulting in the accumulation of (p)ppGpp, which causes the degradation of PopD in an FtsH(D)-dependent manner, thereby releasing pre-formed PopC for secretion. In terms of biological role, inhibitor of protease PopC. In non-starving cells, forms a cytoplasmic complex with PopC and inhibits PopC secretion and activity. In Myxococcus xanthus (strain DK1622), this protein is PopC secretion inhibitor.